Reading from the N-terminus, the 265-residue chain is Hemin import ATP-binding protein HmuV (265 aa).

Residues 13–249 (LKASNLHLQL…TAVENVYGWP (237 aa)) form the ABC transporter domain. 45–52 (GPNGAGKS) is an ATP binding site.

Belongs to the ABC transporter superfamily. Heme (hemin) importer (TC 3.A.1.14.5) family. The complex is composed of two ATP-binding proteins (HmuV), two transmembrane proteins (HmuU) and a solute-binding protein (HmuT).

Its subcellular location is the cell inner membrane. Functionally, part of the ABC transporter complex HmuTUV involved in hemin import. Responsible for energy coupling to the transport system. The polypeptide is Hemin import ATP-binding protein HmuV (Photobacterium damsela subsp. piscicida (Pasteurella piscicida)).